A 1018-amino-acid polypeptide reads, in one-letter code: Cell wall protein 1 (1018 aa).

A signal peptide spans 1–17 (MLPSIVISIVLASFVSA). The CFEM 1 domain occupies 32–143 (NPYTIYPSVA…SSLSAAATAV (112 aa)). Intrachain disulfides connect cysteine 60–cysteine 100, cysteine 64–cysteine 95, cysteine 74–cysteine 81, and cysteine 83–cysteine 116. Residue aspartate 78 participates in heme binding. The tract at residues 147–227 (SEQPVETSSE…STPEDNPYTI (81 aa)) is disordered. The span at 148 to 164 (EQPVETSSEPAGSSQSV) shows a compositional bias: polar residues. Over residues 165–221 (ESSQPAETSSSEPAETSSSEPAETSSETSSEQPASSEPAETSSEESSTITSAPSTPE) the composition is skewed to low complexity. CFEM domains follow at residues 223-334 (NPYT…ATAV) and 393-504 (SSSS…ATAV). Cystine bridges form between cysteine 251-cysteine 291, cysteine 255-cysteine 286, cysteine 265-cysteine 272, and cysteine 274-cysteine 307. Residue aspartate 269 coordinates heme. The interval 338 to 396 (SEQSVETSSESAESSQSVESSQPAETSSEQPSETSSETSSQQLSSITSAPDSSATSSSS) is disordered. Cystine bridges form between cysteine 421-cysteine 461, cysteine 425-cysteine 456, cysteine 435-cysteine 442, and cysteine 444-cysteine 477. Aspartate 439 contacts heme. A disordered region spans residues 507–557 (SDSASETASQEPSETSSEQPSETASQQPAETSSEESSTITSAPSTPEDNPY). Low complexity predominate over residues 509 to 553 (SASETASQEPSETSSEQPSETASQQPAETSSEESSTITSAPSTPE). Positions 555–666 (NPYTIYPSVA…SSLNAAATAV (112 aa)) constitute a CFEM 4 domain. Cystine bridges form between cysteine 583/cysteine 623, cysteine 587/cysteine 618, cysteine 597/cysteine 604, and cysteine 606/cysteine 639. Residue aspartate 601 participates in heme binding. A disordered region spans residues 677–785 (SASESASQVP…STSTKSDAAS (109 aa)). The segment covering 690–766 (SAASSQSANN…AISESVAPSS (77 aa)) has biased composition (low complexity). N-linked (GlcNAc...) asparagine glycans are attached at residues asparagine 698, asparagine 708, asparagine 718, asparagine 729, asparagine 743, asparagine 753, asparagine 769, asparagine 798, and asparagine 965. The span at 767–785 (YGNSTIAQPSTSTKSDAAS) shows a compositional bias: polar residues. Residue serine 989 is the site of GPI-anchor amidated serine attachment. The propeptide at 990–1018 (VAIANMANTKFASTMSLLVASFVFVGLFI) is removed in mature form.

It belongs to the RBT5 family. Post-translationally, the GPI-anchor is attached to the protein in the endoplasmic reticulum and serves to target the protein to the cell surface. There, the glucosamine-inositol phospholipid moiety is cleaved off and the GPI-modified mannoprotein is covalently attached via its lipidless GPI glycan remnant to the 1,6-beta-glucan of the outer cell wall layer.

It is found in the secreted. Its subcellular location is the cell wall. The protein localises to the membrane. Heme-binding protein involved in heme-iron utilization. The ability to acquire iron from host tissues is a major virulence factor of pathogenic microorganisms. Required for biofilm formation. This is Cell wall protein 1 (CSA1) from Candida albicans (strain SC5314 / ATCC MYA-2876) (Yeast).